The sequence spans 209 residues: Ribosomal RNA large subunit methyltransferase E (209 aa).

5 residues coordinate S-adenosyl-L-methionine: G63, W65, D83, D99, and D124. K164 functions as the Proton acceptor in the catalytic mechanism.

It belongs to the class I-like SAM-binding methyltransferase superfamily. RNA methyltransferase RlmE family.

The protein localises to the cytoplasm. The catalysed reaction is uridine(2552) in 23S rRNA + S-adenosyl-L-methionine = 2'-O-methyluridine(2552) in 23S rRNA + S-adenosyl-L-homocysteine + H(+). Functionally, specifically methylates the uridine in position 2552 of 23S rRNA at the 2'-O position of the ribose in the fully assembled 50S ribosomal subunit. This Cronobacter sakazakii (strain ATCC BAA-894) (Enterobacter sakazakii) protein is Ribosomal RNA large subunit methyltransferase E.